Here is a 555-residue protein sequence, read N- to C-terminus: Phosphomethylpyrimidine synthase (555 aa).

The disordered stretch occupies residues 78–104; that stretch reads VRDRWGFDNGSAESTKGELSMSERKPR. Residues Asn191, Met220, Tyr249, His285, 305-307, 346-349, and Glu385 each bind substrate; these read SRG and DALR. Zn(2+) is bound at residue His389. Tyr412 is a binding site for substrate. His453 is a binding site for Zn(2+). [4Fe-4S] cluster-binding residues include Cys535, Cys538, and Cys543.

This sequence belongs to the ThiC family. [4Fe-4S] cluster is required as a cofactor.

The catalysed reaction is 5-amino-1-(5-phospho-beta-D-ribosyl)imidazole + S-adenosyl-L-methionine = 4-amino-2-methyl-5-(phosphooxymethyl)pyrimidine + CO + 5'-deoxyadenosine + formate + L-methionine + 3 H(+). Its pathway is cofactor biosynthesis; thiamine diphosphate biosynthesis. Functionally, catalyzes the synthesis of the hydroxymethylpyrimidine phosphate (HMP-P) moiety of thiamine from aminoimidazole ribotide (AIR) in a radical S-adenosyl-L-methionine (SAM)-dependent reaction. The protein is Phosphomethylpyrimidine synthase of Chlorobaculum parvum (strain DSM 263 / NCIMB 8327) (Chlorobium vibrioforme subsp. thiosulfatophilum).